The chain runs to 415 residues: Calcium/calmodulin-dependent serine/threonine-protein kinase (415 aa).

Residues 12 to 308 (YEISEILGRG…AQELLDHPWV (297 aa)) form the Protein kinase domain. ATP-binding positions include 18–26 (LGRGGFSVV) and K46. Residue D173 is the Proton acceptor of the active site. The segment at 318 to 328 (MDAEIVSRLQS) is calmodulin-binding.

The protein belongs to the protein kinase superfamily. CAMK Ser/Thr protein kinase family. CaMK subfamily.

The catalysed reaction is L-seryl-[protein] + ATP = O-phospho-L-seryl-[protein] + ADP + H(+). The enzyme catalyses L-threonyl-[protein] + ATP = O-phospho-L-threonyl-[protein] + ADP + H(+). In terms of biological role, may be involved in signal transduction processes. In Malus domestica (Apple), this protein is Calcium/calmodulin-dependent serine/threonine-protein kinase.